The following is a 243-amino-acid chain: L-fucose operon activator (243 aa).

In terms of domain architecture, HTH deoR-type spans 1–57 (MKAARQQAIVDLLLNHTSLTTEALSEQLKVSKETIRRDLNELQTQGKILRNHGRAKY). A DNA-binding region (H-T-H motif) is located at residues 19–38 (LTTEALSEQLKVSKETIRRD).

Functionally, transcriptional activator of the fuc operon. This Escherichia coli (strain K12) protein is L-fucose operon activator (fucR).